The sequence spans 152 residues: Proteolipid protein 2 (152 aa).

The 119-residue stretch at 19-137 (FSRTRKGFLL…DAYITFPLRQ (119 aa)) folds into the MARVEL domain. A run of 3 helical transmembrane segments spans residues 25–45 (GFLLFAEIILCLVILICFSTS), 48–68 (GYSFLSVIEMIFAAIFFVVYM), and 85–105 (FFRTLVAAILYLITSIVVLVE). An N-linked (GlcNAc...) asparagine glycan is attached at asparagine 108. Residues 112-132 (IAAGALGLCAAGLFGYDAYIT) form a helical membrane-spanning segment.

It is found in the membrane. In terms of biological role, may play a role in cell differentiation in the intestinal epithelium. The sequence is that of Proteolipid protein 2 (PLP2) from Bos taurus (Bovine).